Consider the following 484-residue polypeptide: Probable cytochrome P450 555A1 (484 aa).

Residues 1–21 form a helical membrane-spanning segment; it reads MIIIVIVVFLFYFSFLNLNLN. Residue cysteine 432 participates in heme binding.

It belongs to the cytochrome P450 family. The cofactor is heme.

It is found in the membrane. This chain is Probable cytochrome P450 555A1 (cyp555A1), found in Dictyostelium discoideum (Social amoeba).